The chain runs to 414 residues: MSEYIRVTEDENDEPIEIPSEDDGTVLLSTVTAQFPGACGLRYRNPVSQCMRGVRLVEGILHAPDAGWGNLVYVVNYPKDNKRKMDETDASSAVKVKRAVQKTSDLIVLGLPWKTTEQDLKDYFSTFGEVLMVQVKKDLKTGHSKGFGFVRFTEYETQVKVMSQRHMIDGRWCDCKLPNSKQSPDEPLRSRKVFVGRCTEDMTAEELQQFFCQYGEVVDVFIPKPFRAFAFVTFADDKVAQSLCGEDLIIKGISVHISNAEPKHNSNRQLERSGRFGGNPGGFGNQGGFGNSRGGGAGLGNNQGGNMGGGMNFGAFSINPAMMAAAQAALQSSWGMMGMLASQQNQSGPSGNNQSQGSMQREPNQAFGSGNNSYSGSNSGAPLGWGSASNAGSGSGFNGGFGSSMDSKSSGWGM.

Residues K79, K84, K95, K102, and K181 each participate in a glycyl lysine isopeptide (Lys-Gly) (interchain with G-Cter in SUMO2) cross-link. 2 consecutive RRM domains span residues 104–200 (SDLI…RCTE) and 191–262 (RKVF…NAEP). S183 carries the post-translational modification Phosphoserine. The tract at residues 216 to 414 (EVVDVFIPKP…MDSKSSGWGM (199 aa)) is interaction with UBQLN2. Over residues 261–274 (EPKHNSNRQLERSG) the composition is skewed to basic and acidic residues. 2 disordered regions span residues 261–301 (EPKH…GLGN) and 341–414 (ASQQ…GWGM). A Glycyl lysine isopeptide (Lys-Gly) (interchain with G-Cter in SUMO2) cross-link involves residue K263. Residues 275-301 (RFGGNPGGFGNQGGFGNSRGGGAGLGN) are compositionally biased toward gly residues. S292 bears the Phosphoserine mark. At R293 the chain carries Omega-N-methylarginine. Composition is skewed to low complexity over residues 342 to 358 (SQQN…SQGS) and 368 to 392 (GSGN…SNAG). Residues 393–402 (SGSGFNGGFG) show a composition bias toward gly residues. Over residues 405–414 (MDSKSSGWGM) the composition is skewed to polar residues.

As to quaternary structure, homodimer. Homooligomer (via its N-terminal domain). Interacts with BRDT. Binds specifically to pyrimidine-rich motifs of TAR DNA and to single stranded TG repeated sequences. Binds to RNA, specifically to UG repeated sequences with a minimum of six contiguous repeats. Interacts with ATXN2; the interaction is RNA-dependent. Interacts with MATR3. Interacts with UBQLN2. Interacts with HNRNPA2B1. Interacts with ZNF106. Interacts with CNOT7/CAF1. Interacts with CRY2. Interacts with PPIA/CYPA; the interaction is dependent on RNA-binding activity of TARDBP and PPIase activity of PPIA/CYPA. Acetylation of PPIA/CYPA at 'Lys-125' favors the interaction of TARDBP with PPIA/CYPA. In terms of processing, hyperphosphorylated. Ubiquitinated.

Its subcellular location is the nucleus. The protein resides in the cytoplasm. It localises to the stress granule. It is found in the mitochondrion. RNA-binding protein that is involved in various steps of RNA biogenesis and processing. Preferentially binds, via its two RNA recognition motifs RRM1 and RRM2, to GU-repeats on RNA molecules predominantly localized within long introns and in the 3'UTR of mRNAs. In turn, regulates the splicing of many non-coding and protein-coding RNAs including proteins involved in neuronal survival, as well as mRNAs that encode proteins relevant for neurodegenerative diseases. Plays a role in maintaining mitochondrial homeostasis by regulating the processing of mitochondrial transcripts. Also regulates mRNA stability by recruiting CNOT7/CAF1 deadenylase on mRNA 3'UTR leading to poly(A) tail deadenylation and thus shortening. In response to oxidative insult, associates with stalled ribosomes localized to stress granules (SGs) and contributes to cell survival. Also participates in the normal skeletal muscle formation and regeneration, forming cytoplasmic myo-granules and binding mRNAs that encode sarcomeric proteins. Plays a role in the maintenance of the circadian clock periodicity via stabilization of the CRY1 and CRY2 proteins in a FBXL3-dependent manner. Negatively regulates the expression of CDK6. Regulates the expression of HDAC6, ATG7 and VCP in a PPIA/CYPA-dependent manner. In Mus musculus (Mouse), this protein is TAR DNA-binding protein 43 (Tardbp).